A 201-amino-acid chain; its full sequence is MQTSPLLEALTEALRCLPGVGPKSAQRMVFHLLQRDRSGGMRLAQALTRAMSEIGHCADCRTFTEQPVCTICANPRRQQSGQICVVESPADIHAIEQTGQFAGSYFVLMGHLSPLDGIGPDDIGLGRLQERLENESIEEVILATNPTVEGEATANYIAEMCAHYGVMASRIAHGVPVGGELEMVDGTTLSHSLAGRHPIKF.

The C4-type zinc-finger motif lies at 57–72 (CADCRTFTEQPVCTIC). In terms of domain architecture, Toprim spans 81–176 (GQICVVESPA…MASRIAHGVP (96 aa)).

This sequence belongs to the RecR family.

In terms of biological role, may play a role in DNA repair. It seems to be involved in an RecBC-independent recombinational process of DNA repair. It may act with RecF and RecO. This is Recombination protein RecR from Sodalis glossinidius (strain morsitans).